We begin with the raw amino-acid sequence, 104 residues long: MIRKAFVMQVNPDAHEEYQRRHSPIWPELEAVLKQHGAHHYAIWLDAQRHLLFATVEIESEARWNAVAQTEVCQRWWKHMREIMPSNPDNSPVSQELKNVFYLE.

Tyr-18 contacts substrate. The active-site Proton donor is the His-22. Residues Tyr-41 and 76–77 (WW) contribute to the substrate site.

This sequence belongs to the rhamnose mutarotase family. As to quaternary structure, homodimer.

It localises to the cytoplasm. It carries out the reaction alpha-L-rhamnose = beta-L-rhamnose. The protein operates within carbohydrate metabolism; L-rhamnose metabolism. Its function is as follows. Involved in the anomeric conversion of L-rhamnose. The protein is L-rhamnose mutarotase of Cronobacter sakazakii (strain ATCC BAA-894) (Enterobacter sakazakii).